Reading from the N-terminus, the 145-residue chain is MSVEVYRQKIEKGGYSAAYEATRRYEREEIEVLSWSSRWESAWSKFGEAVKALGKIEGAPRALVIAKVQEALAYMSKPLPNMKLAMAAAVQAVRACEQLPGMNRERCLDAVAGALGVAKDWIRREMTGGGGGGGGGGGGGGGAVV.

Cys96 and Cys107 form a disulfide bridge.

Heterodimer composed of major capsid protein 1 and major capsid protein 2.

Its subcellular location is the virion. Its function is as follows. Self-assembles to form a helical, filamentous nucleocapsid. Together with capsid protein 2, wraps arounds the DNA and maintains it in an A-form. Capsid proteins probably maintain the DNA in A-form by non-specific desolvation and specific coordination of the DNA phosphate groups by positively charged residues. This certainly protects the viral DNA under conditions such as the extreme desiccation of its host. This is Major capsid protein 2 from Pyrobaculum arsenaticum (PFV2).